Here is a 300-residue protein sequence, read N- to C-terminus: Cation-efflux pump FieF (300 aa).

A run of 4 helical transmembrane segments spans residues 12–32 (AALA…FAWW), 39–59 (ILAA…NLLV), 82–102 (AALA…LTGI), and 114–134 (PLVG…LVTF). Zn(2+)-binding residues include Asp45 and Asp49. Zn(2+)-binding residues include His153 and Asp157. 2 consecutive transmembrane segments (helical) span residues 156 to 176 (SDVM…YGLH) and 182 to 202 (FALG…YEAI).

Belongs to the cation diffusion facilitator (CDF) transporter (TC 2.A.4) family. FieF subfamily. Homodimer.

It is found in the cell inner membrane. The catalysed reaction is Zn(2+)(in) + H(+)(out) = Zn(2+)(out) + H(+)(in). The enzyme catalyses Cd(2+)(in) + H(+)(out) = Cd(2+)(out) + H(+)(in). It carries out the reaction Fe(2+)(in) + H(+)(out) = Fe(2+)(out) + H(+)(in). Divalent metal cation transporter which exports Zn(2+), Cd(2+) and possibly Fe(2+). May be involved in zinc and iron detoxification by efflux. This is Cation-efflux pump FieF from Cronobacter sakazakii (strain ATCC BAA-894) (Enterobacter sakazakii).